We begin with the raw amino-acid sequence, 680 residues long: DNA-directed RNA polymerase subunit beta' (680 aa).

Zn(2+) contacts are provided by cysteine 69, cysteine 71, cysteine 87, and cysteine 90. Mg(2+)-binding residues include aspartate 489, aspartate 491, and aspartate 493.

Belongs to the RNA polymerase beta' chain family. RpoC1 subfamily. As to quaternary structure, in plastids the minimal PEP RNA polymerase catalytic core is composed of four subunits: alpha, beta, beta', and beta''. When a (nuclear-encoded) sigma factor is associated with the core the holoenzyme is formed, which can initiate transcription. Requires Mg(2+) as cofactor. Zn(2+) serves as cofactor.

The protein resides in the plastid. It is found in the chloroplast. The enzyme catalyses RNA(n) + a ribonucleoside 5'-triphosphate = RNA(n+1) + diphosphate. Functionally, DNA-dependent RNA polymerase catalyzes the transcription of DNA into RNA using the four ribonucleoside triphosphates as substrates. This Cucumis sativus (Cucumber) protein is DNA-directed RNA polymerase subunit beta'.